A 1005-amino-acid chain; its full sequence is Ephrin type-A receptor 5 (1005 aa).

Residues 1 to 24 are disordered; sequence MRGSGPRGAGRRRTQGRGGGGDTP. The signal sequence occupies residues 1 to 26; sequence MRGSGPRGAGRRRTQGRGGGGDTPRV. The Extracellular portion of the chain corresponds to 27–575; the sequence is PASLAGCYSA…GASNDQSQIP (549 aa). The Eph LBD domain occupies 62-240; it reads EVNLLDSRTV…YYKKCPSVVR (179 aa). N-linked (GlcNAc...) asparagine glycosylation is found at Asn266, Asn301, Asn371, Asn425, Asn438, and Asn463. 2 Fibronectin type-III domains span residues 359–469 and 470–564; these read PPSA…TNQA and APSP…TTPV. A helical membrane pass occupies residues 576 to 596; sequence IIGVSVTVGVILLAVMIGFLL. Residues 597 to 1005 are Cytoplasmic-facing; the sequence is SGSCCECGCG…MDAVAQVTLE (409 aa). Residues Tyr652 and Tyr658 each carry the phosphotyrosine; by autocatalysis modification. In terms of domain architecture, Protein kinase spans 677–938; it reads ITIERVIGAG…DIVNMLDKLI (262 aa). ATP-binding positions include 683–691 and Lys709; that span reads IGAGEFGEV. Catalysis depends on Asp802, which acts as the Proton acceptor. Residues Tyr835 and Tyr984 each carry the phosphotyrosine; by autocatalysis modification. The SAM domain occupies 967-1005; that stretch reads GAYRSVGEWLEATKMGRYTEIFMENGYSSMDAVAQVTLE.

Belongs to the protein kinase superfamily. Tyr protein kinase family. Ephrin receptor subfamily. Heterotetramer upon binding of the ligand. The heterotetramer is composed of an ephrin dimer and a receptor dimer. Oligomerization is probably required to induce biological responses. Interacts (via SAM domain) with SAMD5 (via SAM domain). In terms of processing, phosphorylated. Phosphorylation is stimulated by the ligand EFNA5. Dephosphorylation upon stimulation by glucose, inhibits EPHA5 forward signaling and results in insulin secretion. Almost exclusively expressed in the nervous system. Predominantly expressed in neurons.

The protein localises to the cell membrane. The protein resides in the cell projection. It is found in the axon. Its subcellular location is the dendrite. It catalyses the reaction L-tyrosyl-[protein] + ATP = O-phospho-L-tyrosyl-[protein] + ADP + H(+). In terms of biological role, receptor tyrosine kinase which binds promiscuously GPI-anchored ephrin-A family ligands residing on adjacent cells, leading to contact-dependent bidirectional signaling into neighboring cells. The signaling pathway downstream of the receptor is referred to as forward signaling while the signaling pathway downstream of the ephrin ligand is referred to as reverse signaling. Among GPI-anchored ephrin-A ligands, EFNA5 most probably constitutes the cognate/functional ligand for EPHA5. Functions as an axon guidance molecule during development and may be involved in the development of the retinotectal, entorhino-hippocampal and hippocamposeptal pathways. Together with EFNA5 plays also a role in synaptic plasticity in adult brain through regulation of synaptogenesis. In addition to its function in the nervous system, the interaction of EPHA5 with EFNA5 mediates communication between pancreatic islet cells to regulate glucose-stimulated insulin secretion. In Rattus norvegicus (Rat), this protein is Ephrin type-A receptor 5 (Epha5).